Consider the following 301-residue polypeptide: t-SNARE affecting a late Golgi compartment protein 2 (301 aa).

Residues 1 to 279 lie on the Cytoplasmic side of the membrane; that stretch reads MAYRDRTGLY…SHQKNTGRLR (279 aa). A coiled-coil region spans residues 92–120; that stretch reads SDKTEQENEIQRLTIQITQDFQRCQKLLQ. In terms of domain architecture, t-SNARE coiled-coil homology spans 206-268; sequence DEQAIRHERA…KSAEKELIKA (63 aa). Residues 280-300 form a helical; Anchor for type IV membrane protein membrane-spanning segment; sequence FICFLILLIVALIVILAIKLL. A topological domain (vesicular) is located at residue arginine 301.

This sequence belongs to the syntaxin family.

Its subcellular location is the golgi apparatus. The protein resides in the trans-Golgi network membrane. It localises to the endosome membrane. In terms of biological role, t-SNARE that functions in transport from the endosome to the late Golgi and on the endocytic pathway. The sequence is that of t-SNARE affecting a late Golgi compartment protein 2 (tlg2) from Schizosaccharomyces pombe (strain 972 / ATCC 24843) (Fission yeast).